The chain runs to 353 residues: DNA-directed RNA polymerase subunit alpha (353 aa).

The tract at residues 1 to 226 is alpha N-terminal domain (alpha-NTD); sequence MLISQRPTLT…ELFGLARELN (226 aa). The tract at residues 241-353 is alpha C-terminal domain (alpha-CTD); sequence ADHIASFGLP…TEDYAETEQL (113 aa). Residues 326–353 form a disordered region; it reads ATGTWSDTDAGSFGDAEGTEDYAETEQL. Acidic residues predominate over residues 342–353; sequence EGTEDYAETEQL.

It belongs to the RNA polymerase alpha chain family. As to quaternary structure, homodimer. The RNAP catalytic core consists of 2 alpha, 1 beta, 1 beta' and 1 omega subunit. When a sigma factor is associated with the core the holoenzyme is formed, which can initiate transcription.

The enzyme catalyses RNA(n) + a ribonucleoside 5'-triphosphate = RNA(n+1) + diphosphate. Functionally, DNA-dependent RNA polymerase catalyzes the transcription of DNA into RNA using the four ribonucleoside triphosphates as substrates. The sequence is that of DNA-directed RNA polymerase subunit alpha from Rhodococcus jostii (strain RHA1).